Here is a 213-residue protein sequence, read N- to C-terminus: Pyridoxine/pyridoxamine 5'-phosphate oxidase (213 aa).

Substrate contacts are provided by residues 8–11 (RREY) and lysine 67. FMN is bound by residues 62–67 (RIVLLK), 77–78 (FT), arginine 83, lysine 84, and glutamine 106. Substrate-binding residues include tyrosine 124, arginine 128, and serine 132. Residues 141 to 142 (QS) and tryptophan 186 each bind FMN. 192–194 (RLH) is a binding site for substrate. Arginine 196 contacts FMN.

Belongs to the pyridoxamine 5'-phosphate oxidase family. In terms of assembly, homodimer. FMN serves as cofactor.

The enzyme catalyses pyridoxamine 5'-phosphate + O2 + H2O = pyridoxal 5'-phosphate + H2O2 + NH4(+). It carries out the reaction pyridoxine 5'-phosphate + O2 = pyridoxal 5'-phosphate + H2O2. Its pathway is cofactor metabolism; pyridoxal 5'-phosphate salvage; pyridoxal 5'-phosphate from pyridoxamine 5'-phosphate: step 1/1. It participates in cofactor metabolism; pyridoxal 5'-phosphate salvage; pyridoxal 5'-phosphate from pyridoxine 5'-phosphate: step 1/1. Its function is as follows. Catalyzes the oxidation of either pyridoxine 5'-phosphate (PNP) or pyridoxamine 5'-phosphate (PMP) into pyridoxal 5'-phosphate (PLP). The polypeptide is Pyridoxine/pyridoxamine 5'-phosphate oxidase (Shewanella woodyi (strain ATCC 51908 / MS32)).